Here is a 94-residue protein sequence, read N- to C-terminus: ESAT-6-like protein EsxI (94 aa).

This sequence belongs to the WXG100 family. ESAT-6 subfamily.

The protein resides in the secreted. This is ESAT-6-like protein EsxI from Mycobacterium bovis (strain ATCC BAA-935 / AF2122/97).